The primary structure comprises 176 residues: NAD(P)H-quinone oxidoreductase subunit 6, chloroplastic (176 aa).

5 helical membrane-spanning segments follow: residues F10–P30, P32–L52, A61–M81, L92–M112, and F152–S172.

The protein belongs to the complex I subunit 6 family. In terms of assembly, NDH is composed of at least 16 different subunits, 5 of which are encoded in the nucleus.

It is found in the plastid. Its subcellular location is the chloroplast thylakoid membrane. It catalyses the reaction a plastoquinone + NADH + (n+1) H(+)(in) = a plastoquinol + NAD(+) + n H(+)(out). It carries out the reaction a plastoquinone + NADPH + (n+1) H(+)(in) = a plastoquinol + NADP(+) + n H(+)(out). In terms of biological role, NDH shuttles electrons from NAD(P)H:plastoquinone, via FMN and iron-sulfur (Fe-S) centers, to quinones in the photosynthetic chain and possibly in a chloroplast respiratory chain. The immediate electron acceptor for the enzyme in this species is believed to be plastoquinone. Couples the redox reaction to proton translocation, and thus conserves the redox energy in a proton gradient. The protein is NAD(P)H-quinone oxidoreductase subunit 6, chloroplastic (ndhG) of Arabidopsis thaliana (Mouse-ear cress).